The chain runs to 372 residues: Chemerin-like receptor 1 (372 aa).

Residues 1 to 39 (MEYEGYNDSSIYGEEYSDGSDYIVDLEEAGPLEAKVAEV) lie on the Extracellular side of the membrane. A glycan (N-linked (GlcNAc...) asparagine) is linked at Asn7. Residues 40-62 (FLVVIYSLVCFLGILGNGLVIVI) form a helical membrane-spanning segment. Over 63-73 (ATFKMKKTVNT) the chain is Cytoplasmic. A helical transmembrane segment spans residues 74-95 (VWFVNLAVADFLFNIFLPIHIT). The Extracellular segment spans residues 96 to 112 (YAAMDYHWVFGKAMCKI). The cysteines at positions 110 and 188 are disulfide-linked. The chain crosses the membrane as a helical span at residues 113-133 (SSFLLSHNMYTSVFLLTVISF). At 134–152 (DRCISVLLPVWSQNHRSVR) the chain is on the cytoplasmic side. The helical transmembrane segment at 153-174 (LAYMTCVVVWVLAFFLSSPSLV) threads the bilayer. At 175 to 223 (FRDTVSTSHGKITCFNNFSLAAPEPFSHSTHPRTDPVGYSRHVAVTVTR) the chain is on the extracellular side. The N-linked (GlcNAc...) asparagine glycan is linked to Asn191. Residues 224–244 (FLCGFLIPVFIITACYLTIVF) traverse the membrane as a helical segment. Residues 245 to 260 (KLQRNRLAKTKKPFKI) lie on the Cytoplasmic side of the membrane. A helical transmembrane segment spans residues 261–281 (IITIIITFFLCWCPYHTLYLL). The Extracellular segment spans residues 282–299 (ELHHTAVPASVFSLGLPL). A helical membrane pass occupies residues 300–319 (ATAVAIANSCMNPILYVFMG). Residues 320–372 (HDFKKFKVALFSRLVNALSEDTGPSSYPSHRSFTKMSSLIEKASVNEKETSTL) lie on the Cytoplasmic side of the membrane. At Ser338 the chain carries Phosphoserine. Thr341 is subject to Phosphothreonine. Residues Ser348, Ser351, and Ser357 each carry the phosphoserine modification. Thr371 is subject to Phosphothreonine.

It belongs to the chemokine-like receptor (CMKLR) family. In terms of tissue distribution, high expression in heart and lung, low in small intestines, colon, kidney, liver, uterus and brain.

The protein localises to the cell membrane. Receptor for the chemoattractant adipokine chemerin/RARRES2 and for the omega-3 fatty acid derived molecule resolvin E1. Interaction with RARRES2 initiates activation of G proteins G(i)/G(o) and beta-arrestin pathways inducing cellular responses via second messenger pathways such as intracellular calcium mobilization, phosphorylation of MAP kinases MAPK1/MAPK3 (ERK1/2), TYRO3, MAPK14/P38MAPK and PI3K leading to multifunctional effects, like, reduction of immune responses, enhancing of adipogenesis and angionesis. Resolvin E1 down-regulates cytokine production in macrophages by reducing the activation of MAPK1/3 (ERK1/2) and NF-kappa-B. Positively regulates adipogenesis and adipocyte metabolism. This Rattus norvegicus (Rat) protein is Chemerin-like receptor 1 (Cmklr1).